Here is a 401-residue protein sequence, read N- to C-terminus: Imidazolonepropionase (401 aa).

Histidine 66 and histidine 68 together coordinate Fe(3+). Histidine 66 and histidine 68 together coordinate Zn(2+). Residues arginine 75, tyrosine 138, and histidine 171 each contribute to the 4-imidazolone-5-propanoate site. Tyrosine 138 is an N-formimidoyl-L-glutamate binding site. Histidine 236 is a binding site for Fe(3+). Histidine 236 provides a ligand contact to Zn(2+). A 4-imidazolone-5-propanoate-binding site is contributed by glutamine 239. Aspartate 311 is a Fe(3+) binding site. Aspartate 311 serves as a coordination point for Zn(2+). Positions 313 and 315 each coordinate N-formimidoyl-L-glutamate. Residue threonine 316 coordinates 4-imidazolone-5-propanoate.

Belongs to the metallo-dependent hydrolases superfamily. HutI family. It depends on Zn(2+) as a cofactor. The cofactor is Fe(3+).

Its subcellular location is the cytoplasm. The catalysed reaction is 4-imidazolone-5-propanoate + H2O = N-formimidoyl-L-glutamate. Its pathway is amino-acid degradation; L-histidine degradation into L-glutamate; N-formimidoyl-L-glutamate from L-histidine: step 3/3. Functionally, catalyzes the hydrolytic cleavage of the carbon-nitrogen bond in imidazolone-5-propanoate to yield N-formimidoyl-L-glutamate. It is the third step in the universal histidine degradation pathway. This chain is Imidazolonepropionase, found in Acinetobacter baumannii (strain ATCC 17978 / DSM 105126 / CIP 53.77 / LMG 1025 / NCDC KC755 / 5377).